We begin with the raw amino-acid sequence, 527 residues long: Catalase (527 aa).

The span at 1–22 (MSDSRDPASDQMKQWKEQRASQ) shows a compositional bias: basic and acidic residues. A disordered region spans residues 1–34 (MSDSRDPASDQMKQWKEQRASQRPDVLTTGGGNP). The residue at position 2 (serine 2) is an N-acetylserine. Residue serine 9 is modified to Phosphoserine. The residue at position 13 (lysine 13) is an N6-succinyllysine. Position 21 is a phosphoserine (serine 21). Catalysis depends on residues histidine 75 and asparagine 148. 4 residues coordinate NADP(+): histidine 194, serine 201, arginine 203, and asparagine 213. Lysine 221 bears the N6-succinyllysine mark. Position 233 is an N6-acetyllysine (lysine 233). Positions 237, 303, 305, and 306 each coordinate NADP(+). N6-acetyllysine; alternate is present on lysine 306. N6-succinyllysine; alternate is present on lysine 306. Tyrosine 358 contacts heme. Phosphoserine occurs at positions 417 and 422. Lysine 430 carries the N6-acetyllysine; alternate modification. An N6-succinyllysine; alternate modification is found at lysine 430. Serine 434 carries the post-translational modification Phosphoserine. Residues lysine 449 and lysine 480 each carry the N6-acetyllysine; alternate modification. N6-succinyllysine; alternate occurs at positions 449 and 480. Lysine 499 is modified (N6-acetyllysine). At threonine 511 the chain carries Phosphothreonine. The residue at position 517 (serine 517) is a Phosphoserine. Position 522 is an N6-succinyllysine (lysine 522). The Microbody targeting signal; atypical motif lies at 524–527 (KANL).

Belongs to the catalase family. Homotetramer. Interacts (via microbody targeting signal) with PEX5, monomeric form interacts with PEX5, leading to its translocation into peroxisomes. Requires heme as cofactor. It depends on NADP(+) as a cofactor.

It is found in the peroxisome matrix. It carries out the reaction 2 H2O2 = O2 + 2 H2O. Functionally, catalyzes the degradation of hydrogen peroxide (H(2)O(2)) generated by peroxisomal oxidases to water and oxygen, thereby protecting cells from the toxic effects of hydrogen peroxide. Promotes growth of cells including T-cells, B-cells, myeloid leukemia cells, melanoma cells, mastocytoma cells and normal and transformed fibroblast cells. This chain is Catalase (Cat), found in Mus musculus (Mouse).